The primary structure comprises 215 residues: CUE domain-containing protein 4, mitochondrial (215 aa).

The N-terminal 29 residues, 1–29 (MQPEQLAGCAVVLTVTVLTLRWMFRVDKG), are a transit peptide targeting the mitochondrion. The CUE domain maps to 48–90 (VNSEHVHLVKTVFPHLESSAIAYDLQKTKNVDATIENALRGQP). The segment at 109–191 (GAGASSHSEE…KEREELFRKR (83 aa)) is disordered. Low complexity-rich tracts occupy residues 122 to 140 (SHEV…SLAS) and 153 to 165 (SSRI…SSSS). Residues 180–191 (SKKEREELFRKR) are compositionally biased toward basic and acidic residues.

It localises to the mitochondrion. In Schizosaccharomyces pombe (strain 972 / ATCC 24843) (Fission yeast), this protein is CUE domain-containing protein 4, mitochondrial.